Consider the following 523-residue polypeptide: Glutamate--cysteine ligase (523 aa).

Belongs to the glutamate--cysteine ligase type 1 family. Type 1 subfamily.

The catalysed reaction is L-cysteine + L-glutamate + ATP = gamma-L-glutamyl-L-cysteine + ADP + phosphate + H(+). It participates in sulfur metabolism; glutathione biosynthesis; glutathione from L-cysteine and L-glutamate: step 1/2. The chain is Glutamate--cysteine ligase from Shewanella oneidensis (strain ATCC 700550 / JCM 31522 / CIP 106686 / LMG 19005 / NCIMB 14063 / MR-1).